A 105-amino-acid polypeptide reads, in one-letter code: Integration host factor subunit beta (105 aa).

This sequence belongs to the bacterial histone-like protein family. Heterodimer of an alpha and a beta chain.

In terms of biological role, this protein is one of the two subunits of integration host factor, a specific DNA-binding protein that functions in genetic recombination as well as in transcriptional and translational control. The sequence is that of Integration host factor subunit beta from Nitrosomonas eutropha (strain DSM 101675 / C91 / Nm57).